The following is a 396-amino-acid chain: Aspartate aminotransferase (396 aa).

Positions 34, 130, and 183 each coordinate L-aspartate. At K246 the chain carries N6-(pyridoxal phosphate)lysine. R374 lines the L-aspartate pocket.

It belongs to the class-I pyridoxal-phosphate-dependent aminotransferase family. Homodimer. The cofactor is pyridoxal 5'-phosphate.

The protein resides in the cytoplasm. The catalysed reaction is L-aspartate + 2-oxoglutarate = oxaloacetate + L-glutamate. This is Aspartate aminotransferase (aspC) from Escherichia coli (strain K12).